The primary structure comprises 173 residues: Alpha-crystallin A chain (173 aa).

Met1 carries the N-acetylmethionine modification. The segment at 1 to 63 is required for complex formation with BFSP1 and BFSP2; sequence MDVTIQHPWF…RTVLDSGVSE (63 aa). Gln6 is modified (deamidated glutamine; partial). Ser45 carries the post-translational modification Phosphoserine. Gln50 is modified (deamidated glutamine; partial). Residues 52–162 form the sHSP domain; that stretch reads LFRTVLDSGV…GHSERAIPVS (111 aa). Position 70 is an N6-acetyllysine (Lys70). Gln90 carries the deamidated glutamine; partial modification. Lys99 is subject to N6-acetyllysine. His100 is a Zn(2+) binding site. Asn101 is modified (deamidated asparagine; partial). Glu102 and His107 together coordinate Zn(2+). Phosphoserine is present on Ser122. Asn123 carries the deamidated asparagine; partial modification. A disordered region spans residues 144–173; that stretch reads PKVQSGLDAGHSERAIPVSREEKPSSAPSS. Gln147 is subject to Deamidated glutamine; partial. The segment covering 153–167 has biased composition (basic and acidic residues); that stretch reads GHSERAIPVSREEKP. Residue His154 coordinates Zn(2+). Ser162 carries an O-linked (GlcNAc) serine glycan.

Belongs to the small heat shock protein (HSP20) family. In terms of assembly, heteromer composed of three CRYAA and one CRYAB subunits. Inter-subunit bridging via zinc ions enhances stability, which is crucial as there is no protein turn over in the lens. Can also form homodimers and homotetramers (dimers of dimers) which serve as the building blocks of homooligomers. Within homooligomers, the zinc-binding motif is created from residues of 3 different molecules. His-100 and Glu-102 from one molecule are ligands of the zinc ion, and His-107 and His-154 residues from additional molecules complete the site with tetrahedral coordination geometry. Part of a complex required for lens intermediate filament formation composed of BFSP1, BFSP2 and CRYAA. In terms of processing, acetylation at Lys-70 may increase chaperone activity. Undergoes age-dependent proteolytical cleavage at the C-terminus.

The protein resides in the cytoplasm. It is found in the nucleus. Its function is as follows. Contributes to the transparency and refractive index of the lens. Acts as a chaperone, preventing aggregation of various proteins under a wide range of stress conditions. Required for the correct formation of lens intermediate filaments as part of a complex composed of BFSP1, BFSP2 and CRYAA. The chain is Alpha-crystallin A chain (CRYAA) from Otolemur crassicaudatus (Brown greater galago).